We begin with the raw amino-acid sequence, 849 residues long: Dopamine receptor 2 (849 aa).

Topologically, residues 1-39 (MEAGETWNVSLEWPPPSLDLSTITQTPSTIVGSGIPLNY) are extracellular. The N-linked (GlcNAc...) asparagine glycan is linked to N8. A helical membrane pass occupies residues 40 to 60 (AGLSLIVIPLITLLGNLLVII). Residues 61 to 70 (SVLRYRALQS) are Cytoplasmic-facing. A helical transmembrane segment spans residues 71–91 (AINFLILGLAVADLLVAIIVM). Over 92–112 (PYAVYVYVTNGDWYLGNLMCD) the chain is Extracellular. An intrachain disulfide couples C111 to C190. The helical transmembrane segment at 113 to 133 (IYMASDVCCSTASILLLAVIS) threads the bilayer. Residues 134-155 (FDRYRAVSLPIQYSRQSQNVKR) are Cytoplasmic-facing. A helical transmembrane segment spans residues 156-176 (VWTLIAVIWLVSLTLASPMVF). At 177-203 (GVNVRPPDANPYECRFYNAEFSILSSM) the chain is on the extracellular side. The tract at residues 183-849 (PDANPYECRF…HHFSNKQAHV (667 aa)) is required for the interaction with gpa-14. Residues 204–224 (ISFVIPCFLVLFVYIRIIIAL) form a helical membrane-spanning segment. Over 225–759 (KKREKAAKMR…QRKEKRATKT (535 aa)) the chain is Cytoplasmic. A disordered region spans residues 450 to 515 (RRSSYADDSQ…NNSRTASITN (66 aa)). Positions 457–470 (DSQPTSSQTSSGDG) are enriched in low complexity. Residues 477–498 (GQKRFRNLSRNYSTKHHRKVVK) are compositionally biased toward basic residues. Residues 501–515 (RGNSRNNSRTASITN) are compositionally biased toward polar residues. The chain crosses the membrane as a helical span at residues 760–780 (LGVVVGVFLVCWVPFFVINIL). Residues 781–798 (NAVCILLNKDSCQVGYDL) are Extracellular-facing. The helical transmembrane segment at 799–819 (FFYCTWIGYMNSFMNPIIYTI) threads the bilayer. Residues 820–849 (FNTEFRRAFKSIIFGRNSTRHHFSNKQAHV) lie on the Cytoplasmic side of the membrane.

The protein belongs to the G-protein coupled receptor 1 family. Interacts (via C-terminus) with the G-alpha protein gpa-14; the interaction is direct. In terms of tissue distribution, expressed in all dopaminergic neurons. Expressed in neurons around the nerve ring and the posterior side of the body including PDE neurons. In hermaphrodites, expressed in the head and tail ganglia including in the RIA interneuron pair, and in a subset of sublateral interneurons and the PDA neuron in the tail. Expressed in cholinergic SIA neurons. Also expressed in the male tail. In males, expressed in the dorsal spicule protractor, ventral spicule protractor, dorsal spicule retractor and ventral spicule retractor muscles and the sensory post-cloacal sensilla B (PCB) neuron. In males, expressed in the sensory hook neurons HOA.

It is found in the cell membrane. Its function is as follows. G-protein coupled receptor which binds to the neurotransmitter dopamine with high affinity leading to the activation of an associated G-protein and downstream signaling pathways. Couples to G-proteins to inhibit adenylate cyclase (AC) activity and cAMP production. Inhibits synaptic vesicle fusion to negatively regulate the release of dopamine at dopaminergic neuron synapses. Antagonizes octopamine signaling in response to food by promoting the dopamine-mediated suppression of crh-1/CREB1 transcription factor activation in cholinergic SIA neurons. This is most likely in association with the G(o)-alpha G-protein subunit goa-1. In association with the G-alpha protein gpa-14, modulates two types of learning behavior: touch habituation and chemosensory associative conditioning. May act partly via tsp-17 to negatively regulate dopamine reuptake transporter dat-1 activity. Plays a role in behavioral plasticity and regulates the decision-making process when conflicting alternatives are present. Promotes male mating behavior by antagonizing acetylcholine signaling to control the protrusions of copulatory spicules from the tail of males during hermaphrodite vulval location. Modulates unc-7 activity at gap junctions to promote inhibitory neuronal signaling transduction between chemosensory and mechanosensory neurons, and thus ensures spicule insertion attempts are confined to the hermaphrodite vulva during copulation. Functionally, G-protein coupled receptor which binds to the neurotransmitter dopamine with high affinity leading to the activation of an associated G-protein and downstream signaling pathways. Couples to G-proteins to inhibit adenylate cyclase (AC) activity and cAMP production. In Caenorhabditis elegans, this protein is Dopamine receptor 2.